A 612-amino-acid polypeptide reads, in one-letter code: Peroxisomal carnitine O-octanoyltransferase (612 aa).

Position 1 is an N-acetylmethionine (methionine 1). N6-succinyllysine is present on residues lysine 40 and lysine 57. Histidine 327 functions as the Proton acceptor in the catalytic mechanism. CoA contacts are provided by residues lysine 406 and 410 to 417 (KEEALHPD). Lysine 406 is subject to N6-acetyllysine; alternate. The residue at position 406 (lysine 406) is an N6-succinyllysine; alternate. Tyrosine 439, threonine 441, and threonine 452 together coordinate (R)-carnitine. The Microbody targeting signal signature appears at 610–612 (AHL).

It belongs to the carnitine/choline acetyltransferase family.

The protein resides in the peroxisome. It carries out the reaction octanoyl-CoA + (R)-carnitine = O-octanoyl-(R)-carnitine + CoA. The catalysed reaction is 4,8-dimethylnonanoyl-CoA + (R)-carnitine = O-4,8-dimethylnonanoyl-(R)-carnitine + CoA. It functions in the pathway lipid metabolism; fatty acid beta-oxidation. Beta-oxidation of fatty acids. The highest activity concerns the C6 to C10 chain length substrate. This chain is Peroxisomal carnitine O-octanoyltransferase (Crot), found in Mus musculus (Mouse).